Consider the following 184-residue polypeptide: MLSPVTAKDKKSFIQWFLNHYRLKKRESVWILNYLVNHSDLLANVHFVRDVKYCPRGIMMTSHCSDEVPFRFYKNHLVTTDAEKSFHDIRLNQNESLYVQLNFRKSNQHSYYASVLEENPFIPEDYYLTTDDKETANGLLDYLLFEQKRNKIIFDIDKALDNGDKELFQKLSEKLEKLSSNRQK.

It belongs to the UPF0302 family.

The protein is UPF0302 protein OB1778 of Oceanobacillus iheyensis (strain DSM 14371 / CIP 107618 / JCM 11309 / KCTC 3954 / HTE831).